Consider the following 419-residue polypeptide: Serine hydroxymethyltransferase (419 aa).

Residues Leu-118 and 122 to 124 (GHL) contribute to the (6S)-5,6,7,8-tetrahydrofolate site. Residue Lys-227 is modified to N6-(pyridoxal phosphate)lysine.

It belongs to the SHMT family. In terms of assembly, homodimer. Pyridoxal 5'-phosphate is required as a cofactor.

It localises to the cytoplasm. It carries out the reaction (6R)-5,10-methylene-5,6,7,8-tetrahydrofolate + glycine + H2O = (6S)-5,6,7,8-tetrahydrofolate + L-serine. The protein operates within one-carbon metabolism; tetrahydrofolate interconversion. It functions in the pathway amino-acid biosynthesis; glycine biosynthesis; glycine from L-serine: step 1/1. Catalyzes the reversible interconversion of serine and glycine with tetrahydrofolate (THF) serving as the one-carbon carrier. This reaction serves as the major source of one-carbon groups required for the biosynthesis of purines, thymidylate, methionine, and other important biomolecules. Also exhibits THF-independent aldolase activity toward beta-hydroxyamino acids, producing glycine and aldehydes, via a retro-aldol mechanism. This Chloroflexus aurantiacus (strain ATCC 29364 / DSM 637 / Y-400-fl) protein is Serine hydroxymethyltransferase.